The primary structure comprises 410 residues: Putative formamidase C869.04 (410 aa).

Belongs to the acetamidase/formamidase family. As to quaternary structure, homotrimer.

The protein resides in the cytoplasm. It is found in the nucleus. It catalyses the reaction formamide + H2O = formate + NH4(+). Hydrolyzes formamide with the production of ammonia which can be used as a source of nitrogen for growth. May also act on acetamide, propanamide and butanamide. The chain is Putative formamidase C869.04 from Schizosaccharomyces pombe (strain 972 / ATCC 24843) (Fission yeast).